Reading from the N-terminus, the 115-residue chain is Holo-[acyl-carrier-protein] synthase (115 aa).

Residues Asp-6 and Glu-51 each coordinate Mg(2+).

Belongs to the P-Pant transferase superfamily. AcpS family. Requires Mg(2+) as cofactor.

It localises to the cytoplasm. It carries out the reaction apo-[ACP] + CoA = holo-[ACP] + adenosine 3',5'-bisphosphate + H(+). Functionally, transfers the 4'-phosphopantetheine moiety from coenzyme A to a Ser of acyl-carrier-protein. The chain is Holo-[acyl-carrier-protein] synthase from Campylobacter jejuni subsp. doylei (strain ATCC BAA-1458 / RM4099 / 269.97).